Reading from the N-terminus, the 326-residue chain is N-acetyl-gamma-glutamyl-phosphate reductase (326 aa).

The active site involves Cys155.

This sequence belongs to the NAGSA dehydrogenase family. Type 1 subfamily.

The protein localises to the cytoplasm. The catalysed reaction is N-acetyl-L-glutamate 5-semialdehyde + phosphate + NADP(+) = N-acetyl-L-glutamyl 5-phosphate + NADPH + H(+). It participates in amino-acid biosynthesis; L-arginine biosynthesis; N(2)-acetyl-L-ornithine from L-glutamate: step 3/4. Catalyzes the NADPH-dependent reduction of N-acetyl-5-glutamyl phosphate to yield N-acetyl-L-glutamate 5-semialdehyde. The sequence is that of N-acetyl-gamma-glutamyl-phosphate reductase from Shewanella baltica (strain OS195).